Here is a 165-residue protein sequence, read N- to C-terminus: Destrin (165 aa).

The residue at position 2 (alanine 2) is an N-acetylalanine. The region spanning 4-153 is the ADF-H domain; it reads GVQVADEVCR…NRACIAEKLG (150 aa). The Nuclear localization signal signature appears at 30 to 34; that stretch reads KKRKK.

It belongs to the actin-binding proteins ADF family.

Functionally, actin-depolymerizing protein. Severs actin filaments (F-actin) and binds to actin monomers (G-actin). Acts in a pH-independent manner. The protein is Destrin (DSTN) of Gallus gallus (Chicken).